Consider the following 267-residue polypeptide: Mannose-specific lectin 1 (267 aa).

The N-terminal stretch at 1–24 (MAKSLVLSSLLLALLLAAPLASLA) is a signal peptide. Bulb-type lectin domains are found at residues 26–136 (NNVL…APNR) and 150–260 (RNVL…SPAR). Disulfide bonds link C54/C76 and C178/C203.

Heterotetramer of 2 domain 1 and 2 domain 2 chains arranged as a dimer of domain 1/domain 2 heterodimers.

Functionally, mannose-specific lectin. Has weak agglutinating activity towards trypsin-treated erythrocytes from rabbit but not from human. This Crocus vernus (Dutch crocus) protein is Mannose-specific lectin 1.